The following is a 20-amino-acid chain: C-reactive protein (20 aa).

Residues 1–20 enclose the Pentraxin (PTX) domain; that stretch reads SPVAASYRATAGLAGKALDF.

It belongs to the pentraxin family. As to quaternary structure, homodimer; disulfide-linked. It is not known if it assembles into a pentraxin (or pentaxin) structure. Pentraxins have a discoid arrangement of 5 non-covalently bound subunits. In terms of processing, glycosylated.

The protein resides in the secreted. Functionally, displays several functions associated with host defense: it promotes agglutination, bacterial capsular swelling, phagocytosis, and complement fixation through its calcium-dependent binding to phosphorylcholine. In Mustelus canis (Smooth dogfish), this protein is C-reactive protein.